A 702-amino-acid chain; its full sequence is Cadmium, zinc and cobalt-transporting ATPase (702 aa).

Over 1–86 (MRLVKQEYVL…HIKKSADDGY (86 aa)) the chain is Cytoplasmic. The region spanning 4 to 72 (VKQEYVLDGL…KVKSIDPHVT (69 aa)) is the HMA domain. Cd(2+)-binding residues include C15 and C18. Co(2+) contacts are provided by C15 and C18. Zn(2+)-binding residues include C15 and C18. The helical transmembrane segment at 87–107 (RNRMVNMLIRMAAAVILGAAA) threads the bilayer. Topologically, residues 108-116 (YLVQSGTIE) are extracellular. The helical transmembrane segment at 117-136 (FFLFLGAYLIIGGDIIIRAV) threads the bilayer. At 137-143 (KNIIRGQ) the chain is on the cytoplasmic side. A helical transmembrane segment spans residues 144-163 (VFDEHFLMALATIGAFLIQQ). Residues 164 to 166 (YPE) are Extracellular-facing. The chain crosses the membrane as a helical span at residues 167 to 186 (GVAVMLFYQIGELFQGAAVS). Topologically, residues 187 to 320 (RSRKSISALM…ITKFAKYYTP (134 aa)) are cytoplasmic. The chain crosses the membrane as a helical span at residues 321 to 339 (AVVIIAVLLAFVPPLVLSG). The Extracellular portion of the chain corresponds to 340-345 (AALSDW). The helical transmembrane segment at 346-363 (VYRALIFLVISCPCALVV) threads the bilayer. Topologically, residues 364 to 648 (SIPLGFFGGI…AIRIAKRTRR (285 aa)) are cytoplasmic. The 4-aspartylphosphate intermediate role is filled by D401. D595 and D599 together coordinate Mg(2+). The chain crosses the membrane as a helical span at residues 649–670 (IVWQNIGFALGVKAIFLILGAF). The Extracellular portion of the chain corresponds to 671 to 678 (GIATMWEA). A helical membrane pass occupies residues 679–694 (VFSDVGVTLLAVANAM). The Cytoplasmic segment spans residues 695 to 702 (RVMRLKNK).

The protein belongs to the cation transport ATPase (P-type) (TC 3.A.3) family. Type IB subfamily.

Its subcellular location is the cell membrane. It catalyses the reaction Zn(2+)(in) + ATP + H2O = Zn(2+)(out) + ADP + phosphate + H(+). The enzyme catalyses Cd(2+)(in) + ATP + H2O = Cd(2+)(out) + ADP + phosphate + H(+). Functionally, couples the hydrolysis of ATP with the transport of cadmium, zinc and cobalt out of the cell. Does not seem to transport copper. The sequence is that of Cadmium, zinc and cobalt-transporting ATPase (cadA) from Bacillus subtilis (strain 168).